Reading from the N-terminus, the 910-residue chain is MARRQGPSRSPWAPTQRRRLATDCPCSRVYVLAHTAAAVANSEQYSVENIPYAGGNYHDDYDPRPGGRRHDSDYSLDPNAHHDAYYSQPYDPAPHDASPGGAYGTQPDHYWQDDDVGRPMIQGANAYGPDPHDPDRDPHPDDPFHDEPAPTPTPAPIKRWKTVKEVQLFKGNLVLDCPIPPRLLNQVPHAQPPERDEFTHMRYSAATCDPADFDAERFTLRQKLFAKPRHTELFIVITMYNEEDELFARTMTGVIKNIEYMNSRTNSKTWGKDAWKKIVVCVVSDGRAKINPRTRAVLAALGVYQDGIAKQQVNGKDVTAHIYEYTTQMTLDIKKGVVGVKKGNTPVQMLFCLKEKNQKKINSHRWFFQAFGQVLDPNICVLIDAGTKPGKDSVYQLWKAFDLEPMCAGACGEIKAMLVHGKKLLNPLVATQNFEYKMSNILDKPLESAFGFITVLPGAFSAYRYVALQNDKAGQGPLEKYFAGEKMHGANAGIFTANMYLAEDRILCFELVSKRNCHWILQYVKSATGETDVPTTMAEFISQRRRWLNGSFFAAVYALAHSFDIFRSDHSFLRKTMFLVEFVYQTISMLFAWFALGNFFLVFRILTASLQNELGTAGKVLFIVFEWLYIAVLITCFILSLGNRPQGSNKWYMSMVYFWGVIMAYLMFASIFITVRSIQSQIRNNGGFNASDLLKDKIFATLIISLLSTYVMWLVVSIIFLDPWHMFTSFIQYLLMTPTYINILNVYAFCNTHDITWGTKGDDKPEKLPSVTTKADGKADIHAPTDDADLNTQYETELHVFSTKWKEEKKVPSPGEKQEDYYRGFRSGVVLFWMFCNLALTALVLQAGGLELTVSDPDEAQEKQNQASTIYLAVVLYSVAGLAAFRFIGAMWFLVVRMVSATCRFTSPIY.

Residues 56–156 are disordered; sequence NYHDDYDPRP…EPAPTPTPAP (101 aa). Basic and acidic residues-rich tracts occupy residues 57 to 84 and 130 to 148; these read YHDDYDPRPGGRRHDSDYSLDPNAHHDA and DPHDPDRDPHPDDPFHDEP. 9 helical membrane passes run 366-386, 448-468, 583-603, 620-640, 655-675, 701-721, 730-750, 828-848, and 876-896; these read WFFQAFGQVLDPNICVLIDAG, SAFGFITVLPGAFSAYRYVAL, VYQTISMLFAWFALGNFFLVF, VLFIVFEWLYIAVLITCFILS, MVYFWGVIMAYLMFASIFITV, TLIISLLSTYVMWLVVSIIFL, FIQYLLMTPTYINILNVYAFC, GVVLFWMFCNLALTALVLQAG, and LYSVAGLAAFRFIGAMWFLVV.

Belongs to the chitin synthase family. Class I subfamily.

Its subcellular location is the cell membrane. The catalysed reaction is [(1-&gt;4)-N-acetyl-beta-D-glucosaminyl](n) + UDP-N-acetyl-alpha-D-glucosamine = [(1-&gt;4)-N-acetyl-beta-D-glucosaminyl](n+1) + UDP + H(+). Its function is as follows. Polymerizes chitin, a structural polymer of the cell wall and septum, by transferring the sugar moiety of UDP-GlcNAc to the non-reducing end of the growing chitin polymer. The polypeptide is Chitin synthase A (CHSA) (Ampelomyces quisqualis (Powdery mildew agent)).